Reading from the N-terminus, the 366-residue chain is Inositol 2-dehydrogenase (366 aa).

Belongs to the Gfo/Idh/MocA family. As to quaternary structure, homotetramer.

It catalyses the reaction myo-inositol + NAD(+) = scyllo-inosose + NADH + H(+). Functionally, involved in the oxidation of myo-inositol (MI) to 2-keto-myo-inositol (2KMI or 2-inosose). This Rhodococcus jostii (strain RHA1) protein is Inositol 2-dehydrogenase.